Consider the following 580-residue polypeptide: Cytochrome c oxidase subunit 1 (580 aa).

The interval 1-25 (MTAVAPRVDGHVAPQRPEPTGHARK) is disordered. A helical membrane pass occupies residues 43-63 (IMYIIMSFSFFFLGGLMALLI). H87 contacts Fe(II)-heme a. 6 helical membrane passes run 90-110 (VMLLLYGTPIVWGFANYVLPL), 122-142 (LNAFGFWITTVGGVAMLAGFL), 171-191 (MWIIGVGATGIGSVASAINML), 214-234 (IFVTSVLALLIFPLLLAAALG), 259-279 (LFWFFGHPEVYVLALPFFGII), and 292-312 (FGYIGLVFATLSIGALSMAVW). Positions 265 and 269 each coordinate Cu cation. The segment at residues 265–269 (HPEVY) is a cross-link (1'-histidyl-3'-tyrosine (His-Tyr)). Positions 314 and 315 each coordinate Cu cation. 2 consecutive transmembrane segments (helical) span residues 316-336 (MFVTGAVLLPFFSFMTFLISV) and 360-380 (MIWAVGFMSTFLFGGLTGIML). H398 serves as a coordination point for heme a3. Transmembrane regions (helical) follow at residues 399-419 (FHYTLFGTVVFASCAGVYFWF), 434-454 (IHFWLTFVGFHGTFMVQHWLG), and 477-497 (ISTIFSFLLGLSVIPFVWNVF). Residue H400 participates in Fe(II)-heme a binding.

It belongs to the heme-copper respiratory oxidase family. Associates with subunits II, III and IV to form cytochrome c oxidase. Requires Cu(2+) as cofactor. It depends on heme as a cofactor.

It localises to the cell membrane. It catalyses the reaction 4 Fe(II)-[cytochrome c] + O2 + 8 H(+)(in) = 4 Fe(III)-[cytochrome c] + 2 H2O + 4 H(+)(out). Its pathway is energy metabolism; oxidative phosphorylation. In terms of biological role, cytochrome c oxidase is the component of the respiratory chain that catalyzes the reduction of oxygen to water. Subunits 1-3 form the functional core of the enzyme complex. CO I is the catalytic subunit of the enzyme. Electrons originating in cytochrome c are transferred via the copper A center of subunit 2 and heme A of subunit 1 to the bimetallic center formed by heme A3 and copper B. The sequence is that of Cytochrome c oxidase subunit 1 (ctaD) from Corynebacterium efficiens (strain DSM 44549 / YS-314 / AJ 12310 / JCM 11189 / NBRC 100395).